A 116-amino-acid polypeptide reads, in one-letter code: UPF0482 protein ECA2253 (116 aa).

The N-terminal stretch at 1 to 31 (MNHYSFSSLIRALIPLSLVIVSAVWQPAALA) is a signal peptide.

This sequence belongs to the UPF0482 family.

The sequence is that of UPF0482 protein ECA2253 from Pectobacterium atrosepticum (strain SCRI 1043 / ATCC BAA-672) (Erwinia carotovora subsp. atroseptica).